The sequence spans 645 residues: Dictomallein-like protein (645 aa).

The N-terminal stretch at 1–13 (MKLSMVMVLLVLA) is a signal peptide. The segment at 19–55 (CGGNDDNNSERTHESGDSNGDVTTPDNDASSNDEDDA) is disordered. In terms of domain architecture, Peptidase M66 spans 177–448 (PALHPELDLT…QRWVRNRARM (272 aa)). Residue His333 participates in Zn(2+) binding. The active site involves Glu334. Residues His337 and His343 each coordinate Zn(2+).

It belongs to the dictomallein family. The cofactor is Zn(2+).

The protein resides in the secreted. This chain is Dictomallein-like protein (dtmL), found in Hahella chejuensis (strain KCTC 2396).